A 166-amino-acid chain; its full sequence is Thioredoxin, mitochondrial (166 aa).

The transit peptide at 1–59 (MAQRLLLRRFLTSVISRKPPQGVWASLTSTSLQTPPYNAGGLTGTPSPARTFHTTRVCS) directs the protein to the mitochondrion. One can recognise a Thioredoxin domain in the interval 61–166 (TFNVQDGPDF…LEAFLKKLIG (106 aa)). Active-site nucleophile residues include C90 and C93. An intrachain disulfide couples C90 to C93. The residue at position 152 (K152) is an N6-acetyllysine; alternate. K152 is modified (N6-succinyllysine; alternate).

Belongs to the thioredoxin family. Monomer. In terms of tissue distribution, expressed in several tissues with the highest expression levels in heart, muscle, kidney and adrenal gland.

The protein localises to the mitochondrion. Important for the control of mitochondrial reactive oxygen species homeostasis, apoptosis regulation and cell viability. Is involved in various redox reactions including the reduction of protein disulfide bonds, through the reversible oxidation of its active center dithiol to a disulfide. This chain is Thioredoxin, mitochondrial (Txn2), found in Rattus norvegicus (Rat).